A 190-amino-acid polypeptide reads, in one-letter code: MPSPVDASSADGGSGLGSHRRKRTTFSKGQLLELERAFAAWPYPNISTHEHLAWVTCLPEAKVQVWFQKRWAKIIKNRKSGILSPGSECPQSSCSLPDTLQQPWDPQMPGQPPPSSGTPQRTSVCRHSSCPAPGLSPRQGWEGAKAVAPWGSAGASEVHPSLERATPQTSLGSLSDLIYALAIVVNVDHS.

Low complexity predominate over residues 1 to 11; the sequence is MPSPVDASSAD. Disordered stretches follow at residues 1–24 and 82–161; these read MPSP…RKRT and ILSP…VHPS. The homeobox DNA-binding region spans 19-78; that stretch reads HRRKRTTFSKGQLLELERAFAAWPYPNISTHEHLAWVTCLPEAKVQVWFQKRWAKIIKNR. A compositionally biased stretch (polar residues) spans 89–100; sequence CPQSSCSLPDTL.

The protein belongs to the paired homeobox family.

It is found in the nucleus. In terms of biological role, probable transcription factor involved in the control of specification of mesoderm and endoderm. The sequence is that of Homeobox protein SEBOX (SEBOX) from Homo sapiens (Human).